A 494-amino-acid chain; its full sequence is Cytochrome P450 monooxygenase ccsD (494 aa).

Residues 5 to 25 traverse the membrane as a helical segment; that stretch reads ISPRTLVLLAVTCSLLVLYFS. Cys438 contacts heme. Asn445 and Asn477 each carry an N-linked (GlcNAc...) asparagine glycan.

The protein belongs to the cytochrome P450 family. Heme is required as a cofactor.

It localises to the membrane. It participates in mycotoxin biosynthesis. Cytochrome P450 monooxygenase; part of the gene cluster that mediates the biosynthesis of a family of the mycotoxins cytochalasins E and K. The hybrid PKS-NRPS synthetase ccsA and the enoyl reductase ccsC are responsible for fusion of phenylalanine with an octaketide backbone and subsequent release of the stable tetramic acid precursor. The polyketide synthase module (PKS) of the PKS-NRPS ccsA is responsible for the synthesis of the octaketide backbone. The downstream nonribosomal peptide synthetase (NRPS) amidates the carboxyl end of the octaketide with a phenylalanine. A reductase-like domain (R) at the C-terminus catalyzes the reductive release of the polyketide-amino acid intermediate. Because ccsA lacks a designated enoylreductase (ER) domain, the required activity is provided the enoyl reductase ccsC. Upon formation of the 11-membered carbocycle-fused perhydroisoindolone intermediate, a number of oxidative steps are required to afford the final cytochalasin E and K, including two hydroxylations at C17 and C18, one alcohol oxidation at C17, one epoxidation at C6 and C7 and two Baeyer-Villiger oxidations. The oxidative modification at C17, C18 and the C6-C7 epoxidation are likely to be catalyzed by the two cytochrome P450 oxygenases ccsD and ccsG. CcsD may be responsible for the epoxidation of the C6-C7 double bond. CcsG may be responsible for the successive oxidative modifications at C17 and C18. The double Baeyer-Villiger oxidations of ketocytochalasin to precytochalasin and cytochalasin Z(16) are among the final steps leading to cytochalasin E and K and are catalyzed by ccsB. The first oxygen insertion step follows that of the classic BVMO mechanism, generating the ester precytochalasin. Release of precytochalasin into an aqueous environment can generate the shunt product iso-precytochalasin through spontaneous isomerization. Alternatively, precytochalasin can undergo further oxidation by ccsB to yield the in-line carbonate-containing cytochalasin Z(16). Cytochalasin Z(16) is a precursor to cytochalasin E and cytochalasin K, whereas iso-precytochalasin is a precursor to cytochalasin Z(17) and rosellichalasin. The hydrolyase ccsE may catalyze hydrolysis of epoxide bond in cytochalasin E to afford cytochalasin K. The function of ccsF has not been assigned but it may play a role in post-PKS-NRPS biosynthetic step, resistance or transport of cytochalasins and related PKS-NRPS products. The polypeptide is Cytochrome P450 monooxygenase ccsD (Aspergillus clavatus (strain ATCC 1007 / CBS 513.65 / DSM 816 / NCTC 3887 / NRRL 1 / QM 1276 / 107)).